The primary structure comprises 597 residues: UvrABC system protein C (597 aa).

One can recognise a GIY-YIG domain in the interval 15–93 (DNPGVYQYYD…IKTLQPRYNV (79 aa)). The UVR domain maps to 207-242 (KESLKDFKKLMNNYAQNLQFEEAQKIKEKIEVLENY).

This sequence belongs to the UvrC family. In terms of assembly, interacts with UvrB in an incision complex.

The protein localises to the cytoplasm. In terms of biological role, the UvrABC repair system catalyzes the recognition and processing of DNA lesions. UvrC both incises the 5' and 3' sides of the lesion. The N-terminal half is responsible for the 3' incision and the C-terminal half is responsible for the 5' incision. In Flavobacterium johnsoniae (strain ATCC 17061 / DSM 2064 / JCM 8514 / BCRC 14874 / CCUG 350202 / NBRC 14942 / NCIMB 11054 / UW101) (Cytophaga johnsonae), this protein is UvrABC system protein C.